We begin with the raw amino-acid sequence, 269 residues long: Shikimate dehydrogenase (NADP(+)) (269 aa).

Residues 14 to 16 and threonine 61 contribute to the shikimate site; that span reads SVS. Lysine 65 acts as the Proton acceptor in catalysis. Asparagine 85 and aspartate 98 together coordinate shikimate. Residues 120-124, 143-148, and threonine 211 each bind NADP(+); these read GAGGA and NRTEEK. Position 213 (tyrosine 213) interacts with shikimate. Glycine 234 serves as a coordination point for NADP(+).

The protein belongs to the shikimate dehydrogenase family. In terms of assembly, homodimer.

It carries out the reaction shikimate + NADP(+) = 3-dehydroshikimate + NADPH + H(+). It functions in the pathway metabolic intermediate biosynthesis; chorismate biosynthesis; chorismate from D-erythrose 4-phosphate and phosphoenolpyruvate: step 4/7. Its function is as follows. Involved in the biosynthesis of the chorismate, which leads to the biosynthesis of aromatic amino acids. Catalyzes the reversible NADPH linked reduction of 3-dehydroshikimate (DHSA) to yield shikimate (SA). This chain is Shikimate dehydrogenase (NADP(+)), found in Archaeoglobus fulgidus (strain ATCC 49558 / DSM 4304 / JCM 9628 / NBRC 100126 / VC-16).